We begin with the raw amino-acid sequence, 232 residues long: 2,3,4,5-tetrahydropyridine-2,6-dicarboxylate N-acetyltransferase (232 aa).

Belongs to the transferase hexapeptide repeat family. DapH subfamily.

The enzyme catalyses (S)-2,3,4,5-tetrahydrodipicolinate + acetyl-CoA + H2O = L-2-acetamido-6-oxoheptanedioate + CoA. It participates in amino-acid biosynthesis; L-lysine biosynthesis via DAP pathway; LL-2,6-diaminopimelate from (S)-tetrahydrodipicolinate (acetylase route): step 1/3. In terms of biological role, catalyzes the transfer of an acetyl group from acetyl-CoA to tetrahydrodipicolinate. This Streptococcus uberis (strain ATCC BAA-854 / 0140J) protein is 2,3,4,5-tetrahydropyridine-2,6-dicarboxylate N-acetyltransferase.